We begin with the raw amino-acid sequence, 223 residues long: MQILKNDWHELLKDEFEQEYYQQLRKHLIQEYRTRTIYPDMYDIFNALHFTSYQDVKVVILGQDPYHGPNQAHGLSFSVKPGVPAPPSLQNIFKELQSDLGCRIPNHGYLKKWAEQGVLLLNTSLTVRAGQANSHAQIGWHQFTDKVIAALSQRQDPVVFILWGKNAQAKQSIIGSQHFIIKSVHPSPLSAHAGFFGSKPFSKANNFLVSQGKEPIDWQIEDI.

Aspartate 64 acts as the Proton acceptor in catalysis.

It belongs to the uracil-DNA glycosylase (UDG) superfamily. UNG family.

The protein localises to the cytoplasm. It carries out the reaction Hydrolyzes single-stranded DNA or mismatched double-stranded DNA and polynucleotides, releasing free uracil.. In terms of biological role, excises uracil residues from the DNA which can arise as a result of misincorporation of dUMP residues by DNA polymerase or due to deamination of cytosine. In Desulfitobacterium hafniense (strain DSM 10664 / DCB-2), this protein is Uracil-DNA glycosylase.